The primary structure comprises 334 residues: Ornithine carbamoyltransferase (334 aa).

Carbamoyl phosphate-binding positions include 57 to 60 (STRT), Q84, R108, and 135 to 138 (HPTQ). Residues N168, D232, and 236-237 (SM) contribute to the L-ornithine site. Carbamoyl phosphate-binding positions include 274 to 275 (CL) and R321.

The protein belongs to the aspartate/ornithine carbamoyltransferase superfamily. OTCase family.

The protein resides in the cytoplasm. It carries out the reaction carbamoyl phosphate + L-ornithine = L-citrulline + phosphate + H(+). Its pathway is amino-acid degradation; L-arginine degradation via ADI pathway; carbamoyl phosphate from L-arginine: step 2/2. Its function is as follows. Reversibly catalyzes the transfer of the carbamoyl group from carbamoyl phosphate (CP) to the N(epsilon) atom of ornithine (ORN) to produce L-citrulline. This is Ornithine carbamoyltransferase from Haemophilus influenzae (strain PittGG).